The primary structure comprises 128 residues: Glyoxylase-like domain-containing protein (128 aa).

One can recognise a VOC domain in the interval 6 to 125 (QISGIEIPAT…EGNTHAICTR (120 aa)).

It functions in the pathway mycotoxin biosynthesis. Its function is as follows. Glyoxylase-like domain-containing protein; part of the gene cluster that mediates the biosynthesis of the selective antifungal agent ascochitine, an o-quinone methide that plays a possible protective role against other microbial competitors in nature and is considered to be important for pathogenicity of legume-associated Didymella species. The pathway probably begins with the synthesis of a keto-aldehyde intermediate by the ascochitine non-reducing polyketide synthase pksAC from successive condensations of 4 malonyl-CoA units, presumably with a simple acetyl-CoA starter unit. Release of the keto-aldehyde intermediate is consistent with the presence of the C-terminal reductive release domain. The HR-PKS (orf7) probably makes a diketide starter unit which is passed to the non-reducing polyketide synthase pksAC for further extension, producing ascochital and ascochitine. The aldehyde dehydrogenase (orf1), the 2-oxoglutarate-dependent dioxygenase (orf3) and the dehydrogenase (orf9) are probably involved in subsequent oxidations of methyl groups to the carboxylic acid of the heterocyclic ring. The ascochitine gene cluster also includes a gene encoding a short peptide with a cupin domain (orf2) that is often found in secondary metabolite gene clusters and which function has still to be determined. This Didymella fabae (Leaf and pod spot disease fungus) protein is Glyoxylase-like domain-containing protein.